The primary structure comprises 297 residues: uncharacterized protein (297 aa).

E46 is a catalytic residue.

Belongs to the PhzF family. In terms of assembly, homodimer and homotetramer.

This is an uncharacterized protein from Escherichia coli (strain K12).